The primary structure comprises 329 residues: NADH-quinone oxidoreductase subunit H (329 aa).

The next 9 membrane-spanning stretches (helical) occupy residues 9-29 (LIKI…ATYI), 42-62 (GPCY…IKLF), 75-95 (FIFT…MAPI), 117-137 (IGFL…ILAG), 154-174 (IQLL…LMVV), 188-208 (GGFL…FLIA), 238-258 (LKWG…SFVI), 269-291 (WGFI…LSMW), and 309-329 (WKIM…IILI).

Belongs to the complex I subunit 1 family. As to quaternary structure, NDH-1 is composed of 14 different subunits. Subunits NuoA, H, J, K, L, M, N constitute the membrane sector of the complex.

The protein resides in the cell inner membrane. The catalysed reaction is a quinone + NADH + 5 H(+)(in) = a quinol + NAD(+) + 4 H(+)(out). Its function is as follows. NDH-1 shuttles electrons from NADH, via FMN and iron-sulfur (Fe-S) centers, to quinones in the respiratory chain. The immediate electron acceptor for the enzyme in this species is believed to be ubiquinone. Couples the redox reaction to proton translocation (for every two electrons transferred, four hydrogen ions are translocated across the cytoplasmic membrane), and thus conserves the redox energy in a proton gradient. This subunit may bind ubiquinone. The protein is NADH-quinone oxidoreductase subunit H of Helicobacter pylori (strain HPAG1).